The following is a 201-amino-acid chain: MBF complex negative regulatory component yox1 (201 aa).

Residues 1–22 (MSLSDSPSKSGNTGKDLISNNE) show a composition bias toward polar residues. Residues 1–42 (MSLSDSPSKSGNTGKDLISNNEAKNHEDEETHQKKRRRRTTD) form a disordered region. Basic and acidic residues predominate over residues 23 to 32 (AKNHEDEETH). Positions 33 to 92 (QKKRRRRTTDAEATLLEQYFLKTPKPSLIERQELSKKLKSSMTPRELQIWFQNKRQSLRR) form a DNA-binding region, homeobox.

In terms of assembly, component of the MBF transcription factor complex. Post-translationally, phosphorylated in response to hydroxyurea. Phosphorylation inhibits the repressor activity and is dependent on rad3. However, the regulation of yox1 by rad3 is probably indirect.

It localises to the nucleus. In terms of biological role, negative regulatory component of the MBF transcription factor complex involved in cell-cycle G1/S phase-specific gene expression and more particularly DNA replication checkpoint-dependent gene expression. The sequence is that of MBF complex negative regulatory component yox1 (yox1) from Schizosaccharomyces pombe (strain 972 / ATCC 24843) (Fission yeast).